The primary structure comprises 491 residues: METEDVTVREQIFHDRVRETIICVLLFICLYILSHFILTHFKKSAEFVTDDIEDATVNKIALWLCTFTLSVAVCAVLLLPISILSNEVLLTFPHSYYMQWLNGSLIRGLWNLVFLFSNLSLVFLMPFAYFFTESEGFAGSKKGVMARVYETAVMLLLLSLLVLGIVWVASALLHHNTARESLYDLWEYYLPYLYSGISLFGVLLLLLCTPFGLSRMFSVTGSLLVKPRLLENLEETMNCAVFEEASLSRKLKSTNTCWISAHLEALNKEFLSVQSKRITLELRKRASPWQRNLVYPVAMLLLLALTAVSVLMVCFHVLELLFDESAMPRGMEDPHLGLASFSMLGSLGAAVQVVIILYLMVSSVVGFYSSPLFTGLLPRAQDTTLTQIIGNCVSLLILSSALPVFSRTLGITKFDLLGDFGRHDWLGSFHIVFLYNMLFAGLTSACLINTVTWALQRELIRAFGLHRLPLTVSRSTIPLKLLLANGLSKIH.

Residues 1–20 (METEDVTVREQIFHDRVRET) lie on the Extracellular side of the membrane. Residues 21–41 (IICVLLFICLYILSHFILTHF) form a helical membrane-spanning segment. At 42–59 (KKSAEFVTDDIEDATVNK) the chain is on the cytoplasmic side. Residues 60 to 80 (IALWLCTFTLSVAVCAVLLLP) form a helical membrane-spanning segment. Topologically, residues 81-111 (ISILSNEVLLTFPHSYYMQWLNGSLIRGLWN) are extracellular. Residues 112-132 (LVFLFSNLSLVFLMPFAYFFT) traverse the membrane as a helical segment. The Cytoplasmic segment spans residues 133 to 152 (ESEGFAGSKKGVMARVYETA). Residues 153-173 (VMLLLLSLLVLGIVWVASALL) form a helical membrane-spanning segment. Topologically, residues 174–192 (HHNTARESLYDLWEYYLPY) are extracellular. Residues 193 to 213 (LYSGISLFGVLLLLLCTPFGL) traverse the membrane as a helical segment. The Cytoplasmic segment spans residues 214–292 (SRMFSVTGSL…RKRASPWQRN (79 aa)). A helical membrane pass occupies residues 293–313 (LVYPVAMLLLLALTAVSVLMV). Topologically, residues 314 to 346 (CFHVLELLFDESAMPRGMEDPHLGLASFSMLGS) are extracellular. A helical transmembrane segment spans residues 347-367 (LGAAVQVVIILYLMVSSVVGF). Residues 368 to 384 (YSSPLFTGLLPRAQDTT) are Cytoplasmic-facing. A helical transmembrane segment spans residues 385–405 (LTQIIGNCVSLLILSSALPVF). Residues 406 to 427 (SRTLGITKFDLLGDFGRHDWLG) lie on the Extracellular side of the membrane. A helical membrane pass occupies residues 428-448 (SFHIVFLYNMLFAGLTSACLI). Over 449–491 (NTVTWALQRELIRAFGLHRLPLTVSRSTIPLKLLLANGLSKIH) the chain is Cytoplasmic.

The protein belongs to the LIMR family. As to quaternary structure, dimer. Can also form higher oligomers.

It is found in the cell membrane. It localises to the endoplasmic reticulum membrane. Functionally, may play a role in lymphocyte development by negatively regulating the canonical Wnt signaling pathway. May act as a LCN1 receptor. The sequence is that of Limb region 1 homolog-like protein (lmbr1l) from Danio rerio (Zebrafish).